Consider the following 221-residue polypeptide: DNA replication complex GINS protein SLD5 (221 aa).

It belongs to the GINS4/SLD5 family. As to quaternary structure, component of the GINS complex which is a heterotetramer of gins1/psf1, gins2/psf2, gins3/psf3 and gins4/sld5. Component of the CMG helicase complex, composed of the mcm2-7 complex, the GINS complex and cdc45.

Its subcellular location is the nucleus. The protein resides in the chromosome. It is found in the cytoplasm. Its function is as follows. Required for initiation of chromosomal DNA replication. Core component of CDC45-MCM-GINS (CMG) helicase, the molecular machine that unwinds template DNA during replication, and around which the replisome is built. This is DNA replication complex GINS protein SLD5 from Xenopus laevis (African clawed frog).